The chain runs to 834 residues: MGNYKSRPTQTCSDEWKKKVSESYAIIIERLEDDLQIKENEFQELRHIFGSDEAFSEVSLNYRTERGLSLLHLCCACGGNKSHIRALMLKGLRPSRLTRNGFPALHLAVYKDSLELITSLLHSGADVQQAGYGGLTALHIAAIAGHPEAVEVLLQHGANVNVQDAVFFTPLHIAAYYGHEQVTSVLLKFGADVNVSGEVGDRPLHLASAKGFFNIVKLLVEGNKADVNAQDNEDHVPLHFCSRFGHHNIVSYLLQSDLEVQPHVINIYGDTPLHLACYNGNFEVAKEIVHVTGTESLTKENIFSETAFHSACTYGKNIDLVKFLLDQNAVNINHRGRDGHTGLHSACYHGHIRLVQFLLDNGADMNLVACDPSRSSGEKDEQTCLMWAYEKGHDAIVTLLKHYKRPQDELPCNEYSQPGGDGSYVSVPSPLGKIKSMTKEKADVLLLRAELPSRFHLQLSEIEFHEIIGSGSFGKVYKGRCRNKIVAIKRYRANTYCSKSDVDMFCREVSILCQLNHPCVVQFVGACLDDPSQFAIVTQYISGGSLFSLLHEQKRILDLQSKLIIAVDVAKGMEYLHSLTQPIIHRDLNSHNILLYEDGHAVVADFGESRFLQSLDEDNMTKQPGNLRWMAPEVFTQCTRYTIKADVFSYALCLWELLTGEIPFAHLKPAAAAADMAYHHIRPPIGYSIPKPISSLLMRGWNACPEGRPEFSEVVRKLEECLCNVELMSPASSNSSGSLSPSSSSDCLLSRGGPGRSHVAALRSRFELEYALNARSYTGWPQSVGTHTNPGLSLEEMNRGAQYSAVDKYGYVSDPMSPMHLHSRRNSGSFEDGN.

The N-myristoyl glycine moiety is linked to residue Gly2. Positions 21-49 (SESYAIIIERLEDDLQIKENEFQELRHIF) form a coiled coil. 10 ANK repeats span residues 66–96 (RGLS…RPSR), 100–129 (NGFP…DVQQ), 133–162 (GGLT…NVNV), 166–195 (VFFT…DVNV), 199–229 (VGDR…DVNA), 233–262 (EDHV…EVQP), 268–297 (YGDT…TESL), 303–334 (FSET…NINH), 338–367 (DGHT…DMNL), and 380–409 (DEQT…PQDE). The region spanning 462-722 (IEFHEIIGSG…EVVRKLEECL (261 aa)) is the Protein kinase domain. ATP is bound by residues 468 to 476 (IGSGSFGKV) and Lys489. The active-site Proton acceptor is Asp587. Residues 815 to 834 (PMSPMHLHSRRNSGSFEDGN) are disordered.

The protein belongs to the protein kinase superfamily. TKL Ser/Thr protein kinase family. MAP kinase kinase kinase subfamily. As to quaternary structure, interacts with TNNI3, ACTC, ACTA1, MYBPC3, AIP, FABP3 and HADHB. Requires Mg(2+) as cofactor. Post-translationally, autophosphorylated.

Its subcellular location is the nucleus. It is found in the cytoplasm. It catalyses the reaction L-seryl-[protein] + ATP = O-phospho-L-seryl-[protein] + ADP + H(+). The enzyme catalyses L-threonyl-[protein] + ATP = O-phospho-L-threonyl-[protein] + ADP + H(+). Its function is as follows. May play a role in cardiac physiology. This chain is Serine/threonine-protein kinase TNNI3K, found in Mus musculus (Mouse).